Consider the following 663-residue polypeptide: Transmembrane 9 superfamily member 2 (663 aa).

The first 28 residues, 1–28 (MSARLPVLSPPRWPRLLLLSLLLLGAVP), serve as a signal peptide directing secretion. At 29–300 (GPRRSGGFYL…LESMPHTHIQ (272 aa)) the chain is on the lumenal side. A helical membrane pass occupies residues 301–321 (WFSIMNSLVIVLFLSGMVAMI). Residues 322–374 (MLRTLHKDIARYNQMDSTEDAQEEFGWKLVHGDIFRPPRKGMLLSVFLGSGTQ) lie on the Cytoplasmic side of the membrane. A helical membrane pass occupies residues 375 to 395 (ILIMTFVTLFFACLGFLSPAN). The Lumenal portion of the chain corresponds to 396–398 (RGA). Residues 399 to 419 (LMTCAVVLWVLLGTPAGYVAA) traverse the membrane as a helical segment. Residues 420–437 (RFYKSFGGEKWKTNVLLT) are Cytoplasmic-facing. A helical membrane pass occupies residues 438–458 (SFLCPGIVFADFFIMNLILWG). The Lumenal segment spans residues 459–466 (EGSSAAIP). Residues 467 to 487 (FGTLVAILALWFCISVPLTFI) form a helical membrane-spanning segment. Over 488–522 (GAYFGFKKNAIEHPVRTNQIPRQIPEQSFYTKPLP) the chain is Cytoplasmic. The chain crosses the membrane as a helical span at residues 523–543 (GIIMGGILPFGCIFIQLFFIL). The Lumenal portion of the chain corresponds to 544-554 (NSIWSHQMYYM). Residues 555-575 (FGFLFLVFIILVITCSEATIL) traverse the membrane as a helical segment. Over 576-591 (LCYFHLCAEDYHWQWR) the chain is Cytoplasmic. A helical transmembrane segment spans residues 592-612 (SFLTSGFTAVYFLIYAVHYFF). Over 613 to 631 (SKLQITGTASTILYFGYTM) the chain is Lumenal. Residues 632 to 652 (IMVLIFFLFTGTIGFFACFWF) traverse the membrane as a helical segment. Topologically, residues 653-663 (VTKIYSVVKVD) are cytoplasmic.

The protein belongs to the nonaspanin (TM9SF) (TC 9.A.2) family.

It localises to the endosome membrane. The protein resides in the golgi outpost. It is found in the cytoplasm. Its subcellular location is the cytoskeleton. The protein localises to the microtubule organizing center. In the intracellular compartments, may function as a channel or small molecule transporter. This is Transmembrane 9 superfamily member 2 (TM9SF2) from Pongo abelii (Sumatran orangutan).